The sequence spans 202 residues: Small ribosomal subunit protein uS4c (202 aa).

The region spanning 90 to 153 (MRLDNIIFRL…KSQAIISKNL (64 aa)) is the S4 RNA-binding domain.

The protein belongs to the universal ribosomal protein uS4 family. Part of the 30S ribosomal subunit. Contacts protein S5. The interaction surface between S4 and S5 is involved in control of translational fidelity.

The protein resides in the plastid. The protein localises to the chloroplast. In terms of biological role, one of the primary rRNA binding proteins, it binds directly to 16S rRNA where it nucleates assembly of the body of the 30S subunit. Its function is as follows. With S5 and S12 plays an important role in translational accuracy. In Rosulabryum capillare (Capillary thread-moss), this protein is Small ribosomal subunit protein uS4c (rps4).